The primary structure comprises 214 residues: Pyridoxine/pyridoxamine 5'-phosphate oxidase (214 aa).

Substrate is bound by residues 9–12 (RKDY) and Lys-67. Residues 62–67 (RMVLLK), 77–78 (FT), Arg-83, Lys-84, and Gln-106 each bind FMN. Positions 124, 128, and 132 each coordinate substrate. FMN-binding positions include 141–142 (QS) and Trp-186. 192 to 194 (RLH) is a substrate binding site. Arg-196 is a binding site for FMN.

The protein belongs to the pyridoxamine 5'-phosphate oxidase family. In terms of assembly, homodimer. FMN serves as cofactor.

The enzyme catalyses pyridoxamine 5'-phosphate + O2 + H2O = pyridoxal 5'-phosphate + H2O2 + NH4(+). It carries out the reaction pyridoxine 5'-phosphate + O2 = pyridoxal 5'-phosphate + H2O2. It participates in cofactor metabolism; pyridoxal 5'-phosphate salvage; pyridoxal 5'-phosphate from pyridoxamine 5'-phosphate: step 1/1. Its pathway is cofactor metabolism; pyridoxal 5'-phosphate salvage; pyridoxal 5'-phosphate from pyridoxine 5'-phosphate: step 1/1. Its function is as follows. Catalyzes the oxidation of either pyridoxine 5'-phosphate (PNP) or pyridoxamine 5'-phosphate (PMP) into pyridoxal 5'-phosphate (PLP). The polypeptide is Pyridoxine/pyridoxamine 5'-phosphate oxidase (Nostoc sp. (strain PCC 7120 / SAG 25.82 / UTEX 2576)).